The sequence spans 361 residues: Histidine biosynthesis bifunctional protein HisB (361 aa).

The segment at 1–172 (MTQPTLFIDR…PKTTACKRPP (172 aa)) is histidinol-phosphatase. Asp-9 functions as the Nucleophile in the catalytic mechanism. The Mg(2+) site is built by Asp-9 and Asp-11. Catalysis depends on Asp-11, which acts as the Proton donor. Zn(2+) is bound by residues Cys-92, His-94, Cys-100, and Cys-102. Asp-129 lines the Mg(2+) pocket. Residues 173–361 (RYAEVVRTTK…NELPSSKGVL (189 aa)) form an imidazoleglycerol-phosphate dehydratase region.

In the N-terminal section; belongs to the histidinol-phosphatase family. This sequence in the C-terminal section; belongs to the imidazoleglycerol-phosphate dehydratase family. Requires Mg(2+) as cofactor. It depends on Zn(2+) as a cofactor.

Its subcellular location is the cytoplasm. The enzyme catalyses D-erythro-1-(imidazol-4-yl)glycerol 3-phosphate = 3-(imidazol-4-yl)-2-oxopropyl phosphate + H2O. It carries out the reaction L-histidinol phosphate + H2O = L-histidinol + phosphate. The protein operates within amino-acid biosynthesis; L-histidine biosynthesis; L-histidine from 5-phospho-alpha-D-ribose 1-diphosphate: step 6/9. It functions in the pathway amino-acid biosynthesis; L-histidine biosynthesis; L-histidine from 5-phospho-alpha-D-ribose 1-diphosphate: step 8/9. This Actinobacillus pleuropneumoniae serotype 3 (strain JL03) protein is Histidine biosynthesis bifunctional protein HisB.